An 81-amino-acid polypeptide reads, in one-letter code: LYR motif-containing protein At3g19508 (81 aa).

This sequence belongs to the complex I LYR family. LYRM9 subfamily.

The protein is LYR motif-containing protein At3g19508 of Arabidopsis thaliana (Mouse-ear cress).